A 1085-amino-acid polypeptide reads, in one-letter code: Ankyrin repeat and IBR domain-containing protein 1 (1085 aa).

The N-myristoyl glycine moiety is linked to residue Gly2. ANK repeat units lie at residues 45–75 (QHNTPLHYAARHGMNRILGTFLFGRDGNPNK) and 145–174 (KKNTPLHYAAASGMKACVELLVKHGGDLFA). The tract at residues 282-322 (CQRSGVQMPTPPPSGYNAWDTLPSPRTPRTTRSSVTSPDEI) is disordered. Low complexity predominate over residues 304 to 319 (PSPRTPRTTRSSVTSP). Residues 330–570 (DTSLCDICMC…GGYYRCTRYE (241 aa)) are TRIAD supradomain. Positions 334, 337, 352, 354, 357, 360, 379, 384, 466, 469, 474, 479, 520, and 523 each coordinate Zn(2+). The RING-type 1 zinc finger occupies 334–384 (CDICMCSISVFEDPVDMPCGHDFCRGCWEAFLNLKIQEGEAHNIFCPAYEC). The IBR-type zinc finger occupies 402-479 (DKRYLQFDIK…LGEAHEPCDC (78 aa)). An RING-type 2; atypical zinc finger spans residues 520–549 (CANCKSPIQKNEGCNHMQCAKCKYDFCWIC). Cys533 is an active-site residue. Zn(2+) contacts are provided by Cys538, Cys541, Cys546, Cys549, His556, and Cys566. A coiled-coil region spans residues 576–641 (EEQSKEMTVE…RALKETEGGC (66 aa)). Ser738 bears the Phosphoserine mark. The segment at 764 to 808 (RRRHRQQRRRGDVHSLLSNPTDLDEPSESTFDLPEGSSGRRPGAS) is disordered. The region spanning 846-865 (EDDPNILLAIQLSLQESGLD) is the UIM domain. A phosphoserine mark is found at Ser879 and Ser906. 3 disordered regions span residues 884–907 (GSSLPSRLDSVPRSTESPRAALSS), 921–959 (GADSDPFSTDTLSSRPLSETRSDFCPSSSDLDSAGQDPS), and 1014–1085 (PPED…VHSV). Positions 926 to 959 (PFSTDTLSSRPLSETRSDFCPSSSDLDSAGQDPS) are enriched in polar residues. Basic and acidic residues predominate over residues 1018 to 1033 (SVSKDTGVHEGERAQM). Over residues 1068–1085 (ASQTPQTSSDWLEQVHSV) the composition is skewed to polar residues.

This sequence belongs to the RBR family.

The catalysed reaction is [E2 ubiquitin-conjugating enzyme]-S-ubiquitinyl-L-cysteine + [acceptor protein]-L-lysine = [E2 ubiquitin-conjugating enzyme]-L-cysteine + [acceptor protein]-N(6)-ubiquitinyl-L-lysine.. Functionally, might act as an E3 ubiquitin-protein ligase, or as part of E3 complex, which accepts ubiquitin from specific E2 ubiquitin-conjugating enzymes and then transfers it to substrates. This chain is Ankyrin repeat and IBR domain-containing protein 1 (Ankib1), found in Mus musculus (Mouse).